The primary structure comprises 379 residues: Alcohol dehydrogenase class-3 (379 aa).

Residues C47, H69, C99, C102, C105, C113, and C176 each coordinate Zn(2+).

This sequence belongs to the zinc-containing alcohol dehydrogenase family. Class-III subfamily. Homodimer. It depends on Zn(2+) as a cofactor.

It localises to the cytoplasm. The enzyme catalyses a primary alcohol + NAD(+) = an aldehyde + NADH + H(+). The catalysed reaction is a secondary alcohol + NAD(+) = a ketone + NADH + H(+). It carries out the reaction S-(hydroxymethyl)glutathione + NADP(+) = S-formylglutathione + NADPH + H(+). It catalyses the reaction S-(hydroxymethyl)glutathione + NAD(+) = S-formylglutathione + NADH + H(+). Functionally, class-III ADH is remarkably ineffective in oxidizing ethanol, but it readily catalyzes the oxidation of long-chain primary alcohols and the oxidation of S-(hydroxymethyl) glutathione. This chain is Alcohol dehydrogenase class-3 (adh5), found in Dictyostelium discoideum (Social amoeba).